The following is a 179-amino-acid chain: MMMSDNAKGRAAHSWKKRGSISSLSNHEFWRKEIHGRIKDSMSTVSYMEEPSQRDDISRLTVQMENTYQLGPPKHFPVVTVNHILKDVVTSYLQVEEYEPELCRQMTKTISEVIKAQVKDLMIPRYKLIVIVHIGQLNRQSILIGSRCLWDPKSDTFSSYVFRNSSLFALANVYAVYLE.

Belongs to the dynein light chain Tctex-type family. Interacts with ZMYND10.

The protein is Dynein light chain Tctex-type 5 (DYNLT5) of Homo sapiens (Human).